A 298-amino-acid polypeptide reads, in one-letter code: MSASNVSLLHETCRQVAAGGCAGLVEICLMHPLDVVKTRFQVQRSVTDPQSYKSLRDSFQVIFRTEGLFGFYKGIIPPILAETPKRAVKFSTFELYKKFLGYMSLSPGLTFPIAGLGSGLTEAVVVNPFEVVKVGLQVNRNMFTEQPSTFAYARQIIKKEGWGFQGLNKGFTATLGRHGIFNMTYFGFYYNVKDNIPSSKDPTLEFLRKFGIGFVSGTVGSVFNIPFDVAKSRIQGPQPVPGEIKYRGCFKTMETVYREEGILALYKGLLPKVMRLGPGGGVMLLVYEYTYAWLQENW.

Solcar repeat units follow at residues 10–99 (HETC…YKKF), 106–195 (SPGL…VKDN), and 204–293 (LEFL…TYAW). Transmembrane regions (helical) follow at residues 16 to 36 (VAAGGCAGLVEICLMHPLDVV), 69 to 88 (FGFYKGIIPPILAETPKRAV), 112 to 132 (PIAGLGSGLTEAVVVNPFEVV), 166 to 186 (GLNKGFTATLGRHGIFNMTYF), 204 to 224 (LEFLRKFGIGFVSGTVGSVFN), and 276 to 296 (LGPGGGVMLLVYEYTYAWLQE).

Belongs to the mitochondrial carrier (TC 2.A.29) family. As to expression, widely expressed.

Its subcellular location is the mitochondrion inner membrane. It catalyses the reaction 2-oxoadipate(in) + 2-oxoglutarate(out) = 2-oxoadipate(out) + 2-oxoglutarate(in). It carries out the reaction hexanedioate(in) + 2-oxoglutarate(out) = hexanedioate(out) + 2-oxoglutarate(in). The enzyme catalyses L-2-aminoadipate(in) + 2-oxoglutarate(out) = L-2-aminoadipate(out) + 2-oxoglutarate(in). The catalysed reaction is glutarate(in) + 2-oxoglutarate(out) = glutarate(out) + 2-oxoglutarate(in). It catalyses the reaction 2-oxoheptanedioate(in) + 2-oxoglutarate(out) = 2-oxoheptanedioate(out) + 2-oxoglutarate(in). It carries out the reaction heptanedioate(in) + 2-oxoglutarate(out) = heptanedioate(out) + 2-oxoglutarate(in). The enzyme catalyses citrate(in) + 2-oxoglutarate(out) = citrate(out) + 2-oxoglutarate(in). Its function is as follows. Transports dicarboxylates across the inner membranes of mitochondria by a counter-exchange mechanism. Can transport 2-oxoadipate (2-oxohexanedioate), 2-oxoglutarate, adipate (hexanedioate), glutarate, and to a lesser extent, pimelate (heptanedioate), 2-oxopimelate (2-oxoheptanedioate), 2-aminoadipate (2-aminohexanedioate), oxaloacetate, and citrate. Plays a central role in catabolism of lysine, hydroxylysine, and tryptophan, by transporting common metabolite intermediates (such as 2-oxoadipate) into the mitochondria, where it is converted into acetyl-CoA and can enter the citric acid (TCA) cycle. The chain is Mitochondrial 2-oxodicarboxylate carrier (Slc25a21) from Rattus norvegicus (Rat).